The following is a 296-amino-acid chain: Low affinity immunoglobulin gamma Fc region receptor II (296 aa).

The first 42 residues, 1-42 (MGIPSFLAFPAARRNRAHCTPWHPWGHMLLWTALLFLAPVSG), serve as a signal peptide directing secretion. The Extracellular portion of the chain corresponds to 43-225 (KPDLPKAVVT…SSSSGPSSMT (183 aa)). 2 consecutive Ig-like C2-type domains span residues 47-129 (PKAV…DVIS) and 130-212 (DWLL…VNIT). Intrachain disulfides connect C70-C112 and C151-C195. N-linked (GlcNAc...) asparagine glycans are attached at residues N79, N86, N105, N179, N186, and N210. Residues 226–246 (AVAIGTCFAAVAIVAAIITWF) form a helical membrane-spanning segment. Residues 247–296 (RLRRKPISAGLTDAENDAARTEAENTVTYSLLSHPDVAEEDSESDYQKRL) lie on the Cytoplasmic side of the membrane. The short motif at 273-278 (VTYSLL) is the ITIM motif element. At Y275 the chain carries Phosphotyrosine; by SRC-type Tyr-kinases. Position 288 is a phosphoserine (S288). Residue Y292 is modified to Phosphotyrosine.

As to quaternary structure, interacts with FGR and LYN. Phosphorylated by SRC-type Tyr-kinases such as LYN, BLK, FYN and SYK. Higher expression is found in macrophages than in neutrophils.

The protein localises to the cell membrane. Binds to the Fc region of immunoglobulins gamma. Low affinity receptor. The sequence is that of Low affinity immunoglobulin gamma Fc region receptor II (FCGR2) from Bos taurus (Bovine).